Consider the following 567-residue polypeptide: Laccase-7 (567 aa).

Positions 1-23 (MEGVRVPIACALILLAISSITSA) are cleaved as a signal peptide. Plastocyanin-like domains follow at residues 31-147 (NVQN…PKSG) and 157-310 (KEVP…YGGA). Asparagine 34, asparagine 50, and asparagine 77 each carry an N-linked (GlcNAc...) asparagine glycan. Residues histidine 81 and histidine 83 each coordinate Cu cation. Asparagine 115 is a glycosylation site (N-linked (GlcNAc...) asparagine). 2 residues coordinate Cu cation: histidine 126 and histidine 128. Residues asparagine 186, asparagine 298, asparagine 339, asparagine 374, asparagine 386, asparagine 427, and asparagine 450 are each glycosylated (N-linked (GlcNAc...) asparagine). The Plastocyanin-like 3 domain maps to 412–551 (DFPDQPPVKF…GMIFVVKNGP (140 aa)). Cu cation is bound by residues histidine 468, histidine 471, histidine 473, histidine 530, cysteine 531, histidine 532, and histidine 536.

It belongs to the multicopper oxidase family. It depends on Cu cation as a cofactor. In terms of tissue distribution, predominantly expressed in tissues other than the inflorescence stem.

The protein localises to the secreted. It is found in the extracellular space. Its subcellular location is the apoplast. It carries out the reaction 4 hydroquinone + O2 = 4 benzosemiquinone + 2 H2O. Its function is as follows. Lignin degradation and detoxification of lignin-derived products. The chain is Laccase-7 (LAC7) from Arabidopsis thaliana (Mouse-ear cress).